We begin with the raw amino-acid sequence, 361 residues long: Queuine tRNA-ribosyltransferase (361 aa).

Asp-92 (proton acceptor) is an active-site residue. Residues 92–96 (DSGGF), Asp-146, Gln-189, and Gly-216 contribute to the substrate site. Residues 247–253 (GVGKPSD) form an RNA binding region. Asp-266 serves as the catalytic Nucleophile. An RNA binding; important for wobble base 34 recognition region spans residues 271-275 (TRSGR). Cys-304, Cys-306, Cys-309, and His-335 together coordinate Zn(2+).

Belongs to the queuine tRNA-ribosyltransferase family. Homodimer. Within each dimer, one monomer is responsible for RNA recognition and catalysis, while the other monomer binds to the replacement base PreQ1. It depends on Zn(2+) as a cofactor.

The enzyme catalyses 7-aminomethyl-7-carbaguanine + guanosine(34) in tRNA = 7-aminomethyl-7-carbaguanosine(34) in tRNA + guanine. Its pathway is tRNA modification; tRNA-queuosine biosynthesis. Its function is as follows. Catalyzes the base-exchange of a guanine (G) residue with the queuine precursor 7-aminomethyl-7-deazaguanine (PreQ1) at position 34 (anticodon wobble position) in tRNAs with GU(N) anticodons (tRNA-Asp, -Asn, -His and -Tyr). Catalysis occurs through a double-displacement mechanism. The nucleophile active site attacks the C1' of nucleotide 34 to detach the guanine base from the RNA, forming a covalent enzyme-RNA intermediate. The proton acceptor active site deprotonates the incoming PreQ1, allowing a nucleophilic attack on the C1' of the ribose to form the product. After dissociation, two additional enzymatic reactions on the tRNA convert PreQ1 to queuine (Q), resulting in the hypermodified nucleoside queuosine (7-(((4,5-cis-dihydroxy-2-cyclopenten-1-yl)amino)methyl)-7-deazaguanosine). The chain is Queuine tRNA-ribosyltransferase from Rickettsia prowazekii (strain Madrid E).